Consider the following 321-residue polypeptide: Beta-ketoacyl-[acyl-carrier-protein] synthase III (321 aa).

Catalysis depends on residues Cys-114 and His-248. Residues 249–253 (QANIR) are ACP-binding. Residue Asn-278 is part of the active site.

It belongs to the thiolase-like superfamily. FabH family. Homodimer.

It is found in the cytoplasm. It carries out the reaction malonyl-[ACP] + acetyl-CoA + H(+) = 3-oxobutanoyl-[ACP] + CO2 + CoA. The protein operates within lipid metabolism; fatty acid biosynthesis. Functionally, catalyzes the condensation reaction of fatty acid synthesis by the addition to an acyl acceptor of two carbons from malonyl-ACP. Catalyzes the first condensation reaction which initiates fatty acid synthesis and may therefore play a role in governing the total rate of fatty acid production. Possesses both acetoacetyl-ACP synthase and acetyl transacylase activities. Its substrate specificity determines the biosynthesis of branched-chain and/or straight-chain of fatty acids. This is Beta-ketoacyl-[acyl-carrier-protein] synthase III from Methylococcus capsulatus (strain ATCC 33009 / NCIMB 11132 / Bath).